Consider the following 1159-residue polypeptide: WASH complex subunit 5 (1159 aa).

Belongs to the strumpellin family. As to quaternary structure, component of the WASH core complex also described as WASH regulatory complex (SHRC) composed of WASH (WASHC1, WASH2P or WASH3P), WASHC2 (WASHC2A or WASHC2C), WASHC3, WASHC4 and WASHC5. The WASH core complex associates via WASHC2 with the F-actin-capping protein dimer (formed by CAPZA1, CAPZA2 or CAPZA3 and CAPZB) in a transient or substoichiometric manner which was initially described as WASH complex. Interacts with VCP, PI4K2A.

Its subcellular location is the cytoplasm. It is found in the cytosol. The protein localises to the endoplasmic reticulum. The protein resides in the early endosome. Its function is as follows. Acts as a component of the WASH core complex that functions as a nucleation-promoting factor (NPF) at the surface of endosomes, where it recruits and activates the Arp2/3 complex to induce actin polymerization, playing a key role in the fission of tubules that serve as transport intermediates during endosome sorting. May be involved in axonal outgrowth. Involved in cellular localization of ADRB2. Involved in cellular trafficking of BLOC-1 complex cargos such as ATP7A and VAMP7. Involved in cytokinesis and following polar body extrusion during oocyte meiotic maturation. This is WASH complex subunit 5 from Mus musculus (Mouse).